The primary structure comprises 234 residues: Protein UL20 homolog (234 aa).

Transmembrane regions (helical) follow at residues 82–102 (VVLFGLSTFVLRPSCCLIFLF), 112–132 (FLILGTTITAFFYGTLMLEMY), 153–173 (IGALSMLGPIIFVAISYNMIF), and 191–211 (TSGFVIYLVMIASLAYSITSI).

It belongs to the alphaherpesvirinae UL20 family. As to quaternary structure, interacts with gK (via N-terminus); this interaction plays a role in the coordinate transport of UL20 and gK to the trans-Golgi network (TGN), and is required for their cell surface expression. Interacts with gB.

It localises to the virion. Its subcellular location is the host cell membrane. It is found in the host endosome membrane. The protein resides in the host Golgi apparatus membrane. The protein localises to the host nucleus membrane. In terms of biological role, plays an essential role in egress of virus particles from the nucleus, cytoplasmic envelopment and virus-induced cell fusion. Forms a functional protein complex with gK and this interaction is absolutely essential for their coordinate intracellular transport, gK glycosylation, expression on host cell surface, and function. Together, they modulate gB-mediated virus-induced cell fusion and virion egress and therefore actively participate in these processes. This Gallid herpesvirus 2 (strain Chicken/Md5/ATCC VR-987) (GaHV-2) protein is Protein UL20 homolog (MDV032).